We begin with the raw amino-acid sequence, 203 residues long: Proteasome subunit beta 2 (203 aa).

A propeptide spans 1-10 (MNLQNKILKG) (removed in mature form; by autocatalysis). Thr11 acts as the Nucleophile in catalysis.

This sequence belongs to the peptidase T1B family. As to quaternary structure, the 20S proteasome core is composed of 14 alpha and 14 beta subunits that assemble into four stacked heptameric rings, resulting in a barrel-shaped structure. The two inner rings, each composed of seven catalytic beta subunits, are sandwiched by two outer rings, each composed of seven alpha subunits. The catalytic chamber with the active sites is on the inside of the barrel. Has a gated structure, the ends of the cylinder being occluded by the N-termini of the alpha-subunits. Is capped at one or both ends by the proteasome regulatory ATPase, PAN.

It localises to the cytoplasm. It carries out the reaction Cleavage of peptide bonds with very broad specificity.. The formation of the proteasomal ATPase PAN-20S proteasome complex, via the docking of the C-termini of PAN into the intersubunit pockets in the alpha-rings, triggers opening of the gate for substrate entry. Interconversion between the open-gate and close-gate conformations leads to a dynamic regulation of the 20S proteasome proteolysis activity. In terms of biological role, component of the proteasome core, a large protease complex with broad specificity involved in protein degradation. This chain is Proteasome subunit beta 2, found in Sulfolobus acidocaldarius (strain ATCC 33909 / DSM 639 / JCM 8929 / NBRC 15157 / NCIMB 11770).